A 689-amino-acid polypeptide reads, in one-letter code: 7SK snRNA methylphosphate capping enzyme (689 aa).

At methionine 1 the chain carries N-acetylmethionine. Residues 1–10 (MIEMAAEKEP) show a composition bias toward basic and acidic residues. Residues 1-167 (MIEMAAEKEP…GGGGFKHPAF (167 aa)) are disordered. Residues 52-84 (GRCAPSAGSPAAAVGRESPGAAATSSSGPQAQQ) are compositionally biased toward low complexity. 4 positions are modified to phosphoserine: serine 57, serine 60, serine 69, and serine 101. Omega-N-methylarginine is present on arginine 117. Residues serine 152, serine 175, and serine 179 each carry the phosphoserine modification. Threonine 213 bears the Phosphothreonine mark. Residues serine 216, serine 217, and serine 254 each carry the phosphoserine modification. Positions 258 to 269 (TGRKRHRHRGQH) are enriched in basic residues. The segment at 258-314 (TGRKRHRHRGQHHQQQQAAGGSESHPVPPTAPLTPLLHGEGASQQPRHRGQNRDAPQ) is disordered. Threonine 291 bears the Phosphothreonine mark. A phosphoserine mark is found at serine 330 and serine 344. Residues 332 to 407 (LPSALQGPSG…HHPLPAAGFK (76 aa)) form a disordered region. Residues 338-359 (GPSGSLSAPPAASVISAPPSSS) show a composition bias toward low complexity. A compositionally biased stretch (basic residues) spans 360 to 369 (SRHRKRRRTS). Serine 390 bears the Phosphoserine mark. S-adenosyl-L-methionine contacts are provided by residues tyrosine 422, arginine 433, 451-453 (GCN), 474-475 (DI), 559-560 (NY), and leucine 581. Residues 431–686 (DGRLRVLKPE…PVYLFHKARS (256 aa)) form the Bin3-type SAM domain. Residue lysine 643 forms a Glycyl lysine isopeptide (Lys-Gly) (interchain with G-Cter in SUMO2) linkage.

It belongs to the methyltransferase superfamily. Core component of the 7SK RNP complex, at least composed of 7SK RNA, LARP7, MEPCE, HEXIM1 (or HEXIM2) and P-TEFb (composed of CDK9 and CCNT1/cyclin-T1). Interacts with METTL16. Interacts with RBM7; upon genotoxic stress this interaction is enhanced, triggering the release of inactive P-TEFb complex from the core, yielding to P-TEFb complex activation. In terms of processing, dephosphorylated at Ser-152 by the PNUTS-PP1 complex, promoting RNA polymerase II transcription pause-release. In terms of tissue distribution, expressed in chronic myeloid leukemia cells, adrenal gland, brain, cerebellum, kidney, lung, mammary gland and testis. Weakly or not expressed in other tissues.

Its subcellular location is the nucleus. It carries out the reaction a 5'-end triphospho-guanosine-ribonucleotide-snRNA + S-adenosyl-L-methionine = a 5'-end methyltriphosphate-guanosine-ribonucleotide-snRNA + S-adenosyl-L-homocysteine. Functionally, S-adenosyl-L-methionine-dependent methyltransferase that adds a methylphosphate cap at the 5'-end of 7SK snRNA (7SK RNA), leading to stabilize it. Also has a non-enzymatic function as part of the 7SK RNP complex: the 7SK RNP complex sequesters the positive transcription elongation factor b (P-TEFb) in a large inactive 7SK RNP complex preventing RNA polymerase II phosphorylation and subsequent transcriptional elongation. The 7SK RNP complex also promotes snRNA gene transcription by RNA polymerase II via interaction with the little elongation complex (LEC). In the 7SK RNP complex, MEPCE is required to stabilize 7SK RNA and facilitate the assembly of 7SK RNP complex. MEPCE has a non-enzymatic function in the 7SK RNP complex; interaction with LARP7 within the 7SK RNP complex occluding its catalytic center. Also required for stability of U6 snRNAs. The sequence is that of 7SK snRNA methylphosphate capping enzyme from Homo sapiens (Human).